An 81-amino-acid polypeptide reads, in one-letter code: MAHSVKIYDTCIGCTQCVRACPTDVLEMIPWDGCKANQIASAPRTEDCVGCKRCESACPTDFLSVRVYLGAETTRSMGLAY.

4Fe-4S ferredoxin-type domains lie at 2–31 (AHSV…MIPW) and 39–68 (IASA…VRVY). [4Fe-4S] cluster is bound by residues cysteine 11, cysteine 14, cysteine 17, cysteine 21, cysteine 48, cysteine 51, cysteine 54, and cysteine 58.

As to quaternary structure, the eukaryotic PSI reaction center is composed of at least 11 subunits. The cofactor is [4Fe-4S] cluster.

The protein localises to the plastid. It localises to the chloroplast thylakoid membrane. The catalysed reaction is reduced [plastocyanin] + hnu + oxidized [2Fe-2S]-[ferredoxin] = oxidized [plastocyanin] + reduced [2Fe-2S]-[ferredoxin]. Functionally, apoprotein for the two 4Fe-4S centers FA and FB of photosystem I (PSI); essential for photochemical activity. FB is the terminal electron acceptor of PSI, donating electrons to ferredoxin. The C-terminus interacts with PsaA/B/D and helps assemble the protein into the PSI complex. Required for binding of PsaD and PsaE to PSI. PSI is a plastocyanin-ferredoxin oxidoreductase, converting photonic excitation into a charge separation, which transfers an electron from the donor P700 chlorophyll pair to the spectroscopically characterized acceptors A0, A1, FX, FA and FB in turn. The sequence is that of Photosystem I iron-sulfur center from Adiantum capillus-veneris (Maidenhair fern).